Here is a 523-residue protein sequence, read N- to C-terminus: Protein nucleotidyltransferase YdiU (523 aa).

ATP is bound by residues G101, G103, R104, K128, D140, G141, R198, and R205. D275 (proton acceptor) is an active-site residue. Mg(2+) contacts are provided by N276 and D285. D285 contacts ATP.

The protein belongs to the SELO family. Mg(2+) serves as cofactor. The cofactor is Mn(2+).

The enzyme catalyses L-seryl-[protein] + ATP = 3-O-(5'-adenylyl)-L-seryl-[protein] + diphosphate. The catalysed reaction is L-threonyl-[protein] + ATP = 3-O-(5'-adenylyl)-L-threonyl-[protein] + diphosphate. It catalyses the reaction L-tyrosyl-[protein] + ATP = O-(5'-adenylyl)-L-tyrosyl-[protein] + diphosphate. It carries out the reaction L-histidyl-[protein] + UTP = N(tele)-(5'-uridylyl)-L-histidyl-[protein] + diphosphate. The enzyme catalyses L-seryl-[protein] + UTP = O-(5'-uridylyl)-L-seryl-[protein] + diphosphate. The catalysed reaction is L-tyrosyl-[protein] + UTP = O-(5'-uridylyl)-L-tyrosyl-[protein] + diphosphate. Nucleotidyltransferase involved in the post-translational modification of proteins. It can catalyze the addition of adenosine monophosphate (AMP) or uridine monophosphate (UMP) to a protein, resulting in modifications known as AMPylation and UMPylation. This Aromatoleum aromaticum (strain DSM 19018 / LMG 30748 / EbN1) (Azoarcus sp. (strain EbN1)) protein is Protein nucleotidyltransferase YdiU.